A 125-amino-acid polypeptide reads, in one-letter code: Large ribosomal subunit protein bL12 (125 aa).

The protein belongs to the bacterial ribosomal protein bL12 family. In terms of assembly, homodimer. Part of the ribosomal stalk of the 50S ribosomal subunit. Forms a multimeric L10(L12)X complex, where L10 forms an elongated spine to which 2 to 4 L12 dimers bind in a sequential fashion. Binds GTP-bound translation factors.

Functionally, forms part of the ribosomal stalk which helps the ribosome interact with GTP-bound translation factors. Is thus essential for accurate translation. This Azoarcus sp. (strain BH72) protein is Large ribosomal subunit protein bL12.